Reading from the N-terminus, the 342-residue chain is Dihydroorotase (342 aa).

H13 and H15 together coordinate Zn(2+). Substrate contacts are provided by residues 15–17 and N41; that span reads HLR. 3 residues coordinate Zn(2+): K98, H135, and H173. K98 carries the N6-carboxylysine modification. H135 serves as a coordination point for substrate. L218 is a substrate binding site. Residue D246 coordinates Zn(2+). The active site involves D246. Substrate is bound by residues H250 and A262.

This sequence belongs to the metallo-dependent hydrolases superfamily. DHOase family. Class II DHOase subfamily. As to quaternary structure, homodimer. The cofactor is Zn(2+).

The catalysed reaction is (S)-dihydroorotate + H2O = N-carbamoyl-L-aspartate + H(+). It participates in pyrimidine metabolism; UMP biosynthesis via de novo pathway; (S)-dihydroorotate from bicarbonate: step 3/3. In terms of biological role, catalyzes the reversible cyclization of carbamoyl aspartate to dihydroorotate. The polypeptide is Dihydroorotase (Vibrio campbellii (strain ATCC BAA-1116)).